A 323-amino-acid chain; its full sequence is Arginase (323 aa).

Positions 119, 142, 144, and 146 each coordinate Mn(2+). Residues 144–148 (HADIN), 155–157 (SKN), and aspartate 198 contribute to the substrate site. The Mn(2+) site is built by aspartate 247 and aspartate 249. Substrate-binding residues include threonine 261 and glutamate 292.

The protein belongs to the arginase family. As to quaternary structure, homotrimer. Mn(2+) is required as a cofactor.

The catalysed reaction is L-arginine + H2O = urea + L-ornithine. Its pathway is nitrogen metabolism; urea cycle; L-ornithine and urea from L-arginine: step 1/1. The chain is Arginase (aru1) from Schizosaccharomyces pombe (strain 972 / ATCC 24843) (Fission yeast).